Here is a 439-residue protein sequence, read N- to C-terminus: SH3 domain-containing protein 1 (439 aa).

Positions aspartate 32–serine 263 constitute a BAR domain. Residues serine 277–isoleucine 291 are compositionally biased toward polar residues. Residues serine 277 to leucine 362 form a disordered region. Positions serine 318 to asparagine 358 are enriched in basic and acidic residues. The SH3 domain maps to aspartate 366–lysine 425.

As to quaternary structure, interacts with the auxilin-like protein AUXI1. Highly expressed in flowers. Detected in seedlings, roots, leaves and stems.

Its subcellular location is the cytoplasmic vesicle. The protein resides in the clathrin-coated vesicle. It localises to the cell membrane. It is found in the golgi apparatus. The protein localises to the trans-Golgi network. Its subcellular location is the endoplasmic reticulum. Lipid binding protein bound strongly to phosphatidic acid, phosphatidylinositol-4-phosphate and phosphatidylinositol-4,5-bisphosphate. Binds actin in vitro. Involved in trafficking and modification of clathrin-coated vesicles. This chain is SH3 domain-containing protein 1 (SH3P1), found in Arabidopsis thaliana (Mouse-ear cress).